Here is a 218-residue protein sequence, read N- to C-terminus: Capsid protein (218 aa).

At Met1 the chain carries N-acetylmethionine; by host. Residues 1-28 (MDKSESTSAGRNRRRRPRRGSRSAPSSA) are disordered. The span at 11–21 (RNRRRRPRRGS) shows a compositional bias: basic residues.

This sequence belongs to the cucumovirus capsid protein family.

The protein resides in the virion. Functionally, capsid protein. Probably binds RNA and plays a role in packaging. This Cucumis sativus (Cucumber) protein is Capsid protein.